Consider the following 89-residue polypeptide: Small ribosomal subunit protein uS15 (89 aa).

Belongs to the universal ribosomal protein uS15 family. As to quaternary structure, part of the 30S ribosomal subunit. Forms a bridge to the 50S subunit in the 70S ribosome, contacting the 23S rRNA.

Functionally, one of the primary rRNA binding proteins, it binds directly to 16S rRNA where it helps nucleate assembly of the platform of the 30S subunit by binding and bridging several RNA helices of the 16S rRNA. Forms an intersubunit bridge (bridge B4) with the 23S rRNA of the 50S subunit in the ribosome. In Trichodesmium erythraeum (strain IMS101), this protein is Small ribosomal subunit protein uS15.